A 373-amino-acid chain; its full sequence is MAKRDYYEVLGVAKNASDEDLKKAYRKLAMKYHPDRNPDSKEAEEKFKEAKEAYEVLGDEQKRAAYDRYGHAGVDPNAAGMGGGMGGGFADAFGDIFGEIFGAGRRGGGGPQVYRGADLKYALEITLEQAASGFDTEIRVPSWENCDTCHGSGAKAGTSPKTCRTCGGSGAVRMQQGFFSVQQTCPTCHGTGKEITDPCPSCDGVGRTRRNKTLQVKIPAGIDDGMRIRSSGNGEPGINGGPPGDLYVEIHIKQHKIFQRDGDDLHCELTIPFTTAALGGELQVPTLGGKAEISIPEGTQSGKTFRLRAKGIRGVRGSYPGDLYCHVVVETPVRLSDEQKAILRQFEASLNDGGDRHSPQSKSWTDRVKEFFS.

A J domain is found at 5–70 (DYYEVLGVAK…QKRAAYDRYG (66 aa)). A CR-type zinc finger spans residues 133 to 211 (GFDTEIRVPS…CDGVGRTRRN (79 aa)). Positions 146, 149, 163, 166, 185, 188, 199, and 202 each coordinate Zn(2+). CXXCXGXG motif repeat units follow at residues 146 to 153 (CDTCHGSG), 163 to 170 (CRTCGGSG), 185 to 192 (CPTCHGTG), and 199 to 206 (CPSCDGVG).

The protein belongs to the DnaJ family. In terms of assembly, homodimer. Zn(2+) is required as a cofactor.

The protein localises to the cytoplasm. Participates actively in the response to hyperosmotic and heat shock by preventing the aggregation of stress-denatured proteins and by disaggregating proteins, also in an autonomous, DnaK-independent fashion. Unfolded proteins bind initially to DnaJ; upon interaction with the DnaJ-bound protein, DnaK hydrolyzes its bound ATP, resulting in the formation of a stable complex. GrpE releases ADP from DnaK; ATP binding to DnaK triggers the release of the substrate protein, thus completing the reaction cycle. Several rounds of ATP-dependent interactions between DnaJ, DnaK and GrpE are required for fully efficient folding. Also involved, together with DnaK and GrpE, in the DNA replication of plasmids through activation of initiation proteins. This is Chaperone protein DnaJ from Bordetella bronchiseptica (strain ATCC BAA-588 / NCTC 13252 / RB50) (Alcaligenes bronchisepticus).